A 38-amino-acid polypeptide reads, in one-letter code: Large ribosomal subunit protein bL36 (38 aa).

The protein belongs to the bacterial ribosomal protein bL36 family.

This is Large ribosomal subunit protein bL36 from Hahella chejuensis (strain KCTC 2396).